Reading from the N-terminus, the 505-residue chain is Catalase (505 aa).

Residues 1–25 (MSKQDGKLTGLFGAPVSDRENSMTA) are disordered. Residues His56 and Asn129 contribute to the active site. Tyr339 lines the heme pocket.

This sequence belongs to the catalase family. Homodimer. The cofactor is heme.

It carries out the reaction 2 H2O2 = O2 + 2 H2O. Decomposes hydrogen peroxide into water and oxygen; serves to protect cells from the toxic effects of hydrogen peroxide. The chain is Catalase (katA) from Staphylococcus warneri.